We begin with the raw amino-acid sequence, 445 residues long: Homoserine O-succinyltransferase (445 aa).

Positions 45-411 (NAVLICHALS…APHGHDSFLF (367 aa)) constitute an AB hydrolase-1 domain. Ser153 serves as the catalytic Nucleophile. Arg223 is a binding site for substrate. Residues Asp373 and His406 contribute to the active site. Asp407 provides a ligand contact to substrate.

It belongs to the AB hydrolase superfamily. MetX family. As to quaternary structure, homodimer.

It is found in the cytoplasm. It carries out the reaction L-homoserine + succinyl-CoA = O-succinyl-L-homoserine + CoA. It participates in amino-acid biosynthesis; L-methionine biosynthesis via de novo pathway; O-succinyl-L-homoserine from L-homoserine: step 1/1. Functionally, transfers a succinyl group from succinyl-CoA to L-homoserine, forming succinyl-L-homoserine. The sequence is that of Homoserine O-succinyltransferase from Psychrobacter arcticus (strain DSM 17307 / VKM B-2377 / 273-4).